The primary structure comprises 502 residues: MTDKKYIIALDQGTTSSRAVLLDHDANIVEIAQREFTQIYPQAGWVEHNPMEIWATQSSTLNEVVAKAGITADQIAAIGITNQRETTIVWEKETGKPIYNAIVWQCRRTTEITDKLKADGHEDYIRQTTGLVVDPYFSGTKIKWILDNVEGAREQAERGELLFGTVDTWLVWKLTQGRAHVTDYTNASRTMLFNIHTLQWDDNMLAILGIPRAMLPEVRNSSEIYGQTNIGGKGGVRIPVAGMAGDQQAALYGHLCVNAGQAKNTYGTGCFMLMHTGDNAVQSQNGLLTTIACNAKGEPAYALEGSIFMGGASIQWLRDELKIVHDSYDSEYFATRVPDCNGVYVVPAFTGLGAPYWDPYARGAIFGLSRGANRNHIVRATLESIAYQTRDVLEAMQSDSGQTLQALRVDGGATENNFLMQFQADILATKVERPKVKEVTALGAAYLAGLATGFWKDLSELRDKASIEKTFVPDGDEAKRTRRYKGWKKAVKRALEWEKEEE.

Thr14 lines the ADP pocket. 3 residues coordinate ATP: Thr14, Thr15, and Ser16. Thr14 serves as a coordination point for sn-glycerol 3-phosphate. ADP is bound at residue Arg18. Residues Arg84, Glu85, Tyr136, and Asp246 each coordinate sn-glycerol 3-phosphate. Arg84, Glu85, Tyr136, Asp246, and Gln247 together coordinate glycerol. ADP is bound by residues Thr268 and Gly311. 4 residues coordinate ATP: Thr268, Gly311, Gln315, and Gly412. ADP-binding residues include Gly412 and Asn416.

Belongs to the FGGY kinase family.

The catalysed reaction is glycerol + ATP = sn-glycerol 3-phosphate + ADP + H(+). The protein operates within polyol metabolism; glycerol degradation via glycerol kinase pathway; sn-glycerol 3-phosphate from glycerol: step 1/1. Its activity is regulated as follows. Inhibited by fructose 1,6-bisphosphate (FBP). Functionally, key enzyme in the regulation of glycerol uptake and metabolism. Catalyzes the phosphorylation of glycerol to yield sn-glycerol 3-phosphate. The sequence is that of Glycerol kinase from Pasteurella multocida (strain Pm70).